The following is a 2009-amino-acid chain: Protein Daple (2009 aa).

Positions leucine 11–alanine 131 constitute a Calponin-homology (CH) domain. The segment at glutamine 221–histidine 251 is disordered. Phosphoserine is present on residues serine 227 and serine 239. Over residues serine 232–serine 245 the composition is skewed to low complexity. Coiled coils occupy residues glutamate 247–serine 425 and glutamate 456–glycine 1008. The residue at position 486 (serine 486) is a Phosphoserine. Residues leucine 1002–histidine 1036 form a disordered region. Residues serine 1025–histidine 1036 show a composition bias toward basic and acidic residues. Residues histidine 1190–lysine 1384 adopt a coiled-coil conformation. Basic and acidic residues predominate over residues lysine 1410–serine 1419. Disordered regions lie at residues lysine 1410–methionine 1716 and glycine 1757–valine 1787. Low complexity predominate over residues proline 1430–serine 1439. Position 1435 is a phosphoserine (serine 1435). Residues glutamine 1440–proline 1449 show a composition bias toward polar residues. 2 stretches are compositionally biased toward low complexity: residues threonine 1510 to threonine 1524 and asparagine 1562 to glycine 1581. Serine 1592 carries the phosphoserine modification. The short motif at histidine 1652–cysteine 1683 is the GBA element. A compositionally biased stretch (basic and acidic residues) spans proline 1681–aspartate 1697. The segment covering arginine 1761–cysteine 1783 has biased composition (polar residues). Phosphoserine is present on serine 1798. The interval serine 1808–valine 2009 is disordered. The span at arginine 1866–leucine 1883 shows a compositional bias: basic and acidic residues. Residues glycine 1898–serine 1911 are compositionally biased toward polar residues. Residues threonine 1943–tyrosine 1954 show a composition bias toward gly residues. Residues serine 1981–alanine 1991 are compositionally biased toward polar residues. Residues tyrosine 2006 to valine 2009 carry the PDZ-binding motif. Positions glycine 2007–valine 2009 are DVL1-binding.

Belongs to the CCDC88 family. Homooligomer. Interacts with DVL1 (via PDZ domain); dissociates following initiation of non-canonical Wnt signaling. Interacts (via C-terminus) with ligand-activated Wnt receptor FZD7; competes with DVL1 for binding to FZD7 and displaces DVL1 from ligand-activated FZD7. Interacts (via GBA motif) with guanine nucleotide-binding protein G(i) alpha subunits GNAI1, GNAI2 and GNAI3 (inactive GDP-bound form); interacts with higher affinity with GNAI1 and GNAI3 than with GNAI2 and interaction leads to G(i) alpha subunit activation. Does not interact with GNAO1.

It is found in the cytoplasm. Its subcellular location is the cell junction. Required for activation of guanine nucleotide-binding proteins (G-proteins) during non-canonical Wnt signaling. Binds to ligand-activated Wnt receptor FZD7, displacing DVL1 from the FZD7 receptor and leading to inhibition of canonical Wnt signaling. Acts as a non-receptor guanine nucleotide exchange factor by also binding to guanine nucleotide-binding protein G(i) alpha (Gi-alpha) subunits, leading to their activation. Binding to Gi-alpha subunits displaces the beta and gamma subunits from the heterotrimeric G-protein complex, triggering non-canonical Wnt responses such as activation of RAC1 and PI3K-AKT signaling. Promotes apical constriction of cells via ARHGEF18. The chain is Protein Daple (Ccdc88c) from Mus musculus (Mouse).